A 470-amino-acid polypeptide reads, in one-letter code: MKTLYDKLWSDHVVHAESDDPNGMVILYIDRHLVHEVTSPQAFESLKLAGRKPWRTGSILAVADHNVPTTDRSSGISDPVSRLQVETLDQNCEEFAITEFRMNDERQGIVHVIGPEQGATLPGMTVVCGDSHTSTHGAFACLAFGIGTSEVEHVLATQCLVARKSKTMLVRVEGDLPPGVTAKDIALAVIGEIGTAGGTGYAIEFAGSAIRSLSMEGRMTLCNMAIEAGARAGMVGADEVTIDYIKGRPFAPQGALWDQAVAYWRTLKSDEDAVFDRMVELKAVNIKPQVTWGTSPEMVTTVDGYVPDPADISDPTKRHDVEHALGYMGLKPKMPIQEITLDKVFIGSCTNSRIEDLRAAAEIVKGKRIAPNIRLAMVVPGSGLVKSMAEKEGLDKIFLSAGFEWREPGCSMCLAMNDDRLLPGERCASTSNRNFEGRQGPGGRTHLVSPAMAAAAAIAGHFVDVRSFIR.

Residues Cys-349, Cys-410, and Cys-413 each coordinate [4Fe-4S] cluster.

It belongs to the aconitase/IPM isomerase family. LeuC type 1 subfamily. In terms of assembly, heterodimer of LeuC and LeuD. It depends on [4Fe-4S] cluster as a cofactor.

The enzyme catalyses (2R,3S)-3-isopropylmalate = (2S)-2-isopropylmalate. It functions in the pathway amino-acid biosynthesis; L-leucine biosynthesis; L-leucine from 3-methyl-2-oxobutanoate: step 2/4. In terms of biological role, catalyzes the isomerization between 2-isopropylmalate and 3-isopropylmalate, via the formation of 2-isopropylmaleate. The protein is 3-isopropylmalate dehydratase large subunit of Nitrosomonas europaea (strain ATCC 19718 / CIP 103999 / KCTC 2705 / NBRC 14298).